Reading from the N-terminus, the 710-residue chain is uncharacterized protein (710 aa).

A disordered region spans residues 1 to 40 (MSESDGAFKSPSLPPSHHAPAPMSPEKIRAPAEQMDGPVE). Residues 15-25 (PSHHAPAPMSP) are compositionally biased toward low complexity. The region spanning 108 to 165 (VVIGRIKPGCDLLMEHPSISRYHCILQYGNDKMSKTGKGWHIFELGSTHGSRMNKKRL) is the FHA domain. Coiled coils occupy residues 206 to 240 (TEMKLRKHKKELEAKLRAAAAQEMIDDEKREKEEE), 409 to 440 (ETDTYESLCRKLEESKKEIIECQKHLDELSAG), and 471 to 502 (AKTKMEKSKWRQKLMAATHESQKLEKLVKIAK). Residues 230 to 250 (IDDEKREKEEEGCGWGMDYGE) form a disordered region. 3 disordered regions span residues 535-560 (EIDQTPSQGPGPSTSATLPATVAPTS), 591-619 (KNSLPAVDEPSSVKDEVSEETPQKEAFGS), and 671-710 (EDYGAGVEDRDEKYSTWMPPNADQSEAKQDALRAKFAGRY). Polar residues predominate over residues 538–560 (QTPSQGPGPSTSATLPATVAPTS). Positions 613–661 (QKEAFGSKVQKRVAQWEEELEAEKEELAKKQKLEAEEEAKKKVQRVRRR) form a coiled coil.

This is an uncharacterized protein from Caenorhabditis elegans.